A 129-amino-acid polypeptide reads, in one-letter code: UPF0225 protein XC_4246 (129 aa).

This sequence belongs to the UPF0225 family.

The chain is UPF0225 protein XC_4246 from Xanthomonas campestris pv. campestris (strain 8004).